The primary structure comprises 370 residues: Divinyl chlorophyll a/b light-harvesting protein PcbD (370 aa).

Transmembrane regions (helical) follow at residues 27-47, 88-108, 140-160, 201-221, 248-268, and 315-335; these read FIASHIGHTGLIAFAAGGSTL, VAAVAIVHLVLSMVYGGGALL, FILGHHLFFFGMACIAFVEWA, VMGGHAFLAFAELTGATIHMV, AVLSWSLAGIGWMAIVAAFWA, and LVNVHYYFGFFFLQGHFWHAL.

The protein belongs to the PsbB/PsbC family. IsiA/Pcb subfamily. In terms of assembly, the antenna complex consists of divinyl chlorophylls (a and b) and divinyl chlorophyll a/b binding proteins and binds more divinyl chlorophyll b than does the antenna complex from high-light-adapted Prochlorococcus. Divinyl chlorophyll a serves as cofactor. Divinyl chlorophyll b is required as a cofactor.

The protein localises to the cellular thylakoid membrane. Functionally, the antenna complex functions as a light receptor, it captures and delivers excitation energy to photosystems II and I. The Prochlorales pcb genes are not related to higher plant LHCs. The protein is Divinyl chlorophyll a/b light-harvesting protein PcbD (pcbD) of Prochlorococcus marinus (strain NATL2A).